We begin with the raw amino-acid sequence, 121 residues long: Colipase-like protein 1 (121 aa).

A signal peptide spans 1-23; that stretch reads MMLPQWLLLLFLLFFFLFLLTRG. Disulfide bonds link C39–C50, C45–C61, C49–C83, C71–C91, and C85–C107.

It belongs to the colipase family. As to expression, exclusively expressed in epididymis, in the corpus region.

It localises to the secreted. The sequence is that of Colipase-like protein 1 (CLPSL1) from Homo sapiens (Human).